The following is a 173-amino-acid chain: MKETIRIIGIDPGLLRTGWGIVESLGNSLHFIGSGTVTSNAEMDLASRLCQLHEGLSKVLHEFMPHEAAVEHTFVNKDATATLKLGQARGIALLAPAQAGLPVAEYAPNAVKKAVIGVGHGEKQQIHMMVKVLMPRASFDTSDAADALAIAICHAHHRQSIVSARRMQALLAG.

Residues aspartate 11, glutamate 71, and aspartate 143 contribute to the active site. Mg(2+) contacts are provided by aspartate 11, glutamate 71, and aspartate 143.

Belongs to the RuvC family. In terms of assembly, homodimer which binds Holliday junction (HJ) DNA. The HJ becomes 2-fold symmetrical on binding to RuvC with unstacked arms; it has a different conformation from HJ DNA in complex with RuvA. In the full resolvosome a probable DNA-RuvA(4)-RuvB(12)-RuvC(2) complex forms which resolves the HJ. Requires Mg(2+) as cofactor.

The protein localises to the cytoplasm. It catalyses the reaction Endonucleolytic cleavage at a junction such as a reciprocal single-stranded crossover between two homologous DNA duplexes (Holliday junction).. In terms of biological role, the RuvA-RuvB-RuvC complex processes Holliday junction (HJ) DNA during genetic recombination and DNA repair. Endonuclease that resolves HJ intermediates. Cleaves cruciform DNA by making single-stranded nicks across the HJ at symmetrical positions within the homologous arms, yielding a 5'-phosphate and a 3'-hydroxyl group; requires a central core of homology in the junction. The consensus cleavage sequence is 5'-(A/T)TT(C/G)-3'. Cleavage occurs on the 3'-side of the TT dinucleotide at the point of strand exchange. HJ branch migration catalyzed by RuvA-RuvB allows RuvC to scan DNA until it finds its consensus sequence, where it cleaves and resolves the cruciform DNA. The sequence is that of Crossover junction endodeoxyribonuclease RuvC from Brucella suis biovar 1 (strain 1330).